The sequence spans 474 residues: Trehalose-6-phosphate synthase (474 aa).

Arg10 lines the D-glucose 6-phosphate pocket. 22 to 23 (GG) serves as a coordination point for UDP-alpha-D-glucose. Residues Tyr77 and Asp131 each coordinate D-glucose 6-phosphate. 2 residues coordinate UDP-alpha-D-glucose: Arg263 and Lys268. Arg301 is a D-glucose 6-phosphate binding site. Residues Phe340 and 366-370 (LVAKE) contribute to the UDP-alpha-D-glucose site.

It belongs to the glycosyltransferase 20 family. Homotetramer.

The enzyme catalyses D-glucose 6-phosphate + UDP-alpha-D-glucose = alpha,alpha-trehalose 6-phosphate + UDP + H(+). It functions in the pathway glycan biosynthesis; trehalose biosynthesis. Functionally, probably involved in the osmoprotection via the biosynthesis of trehalose. Catalyzes the transfer of glucose from UDP-alpha-D-glucose (UDP-Glc) to D-glucose 6-phosphate (Glc-6-P) to form trehalose-6-phosphate. Acts with retention of the anomeric configuration of the UDP-sugar donor. The chain is Trehalose-6-phosphate synthase from Shigella dysenteriae serotype 1 (strain Sd197).